We begin with the raw amino-acid sequence, 194 residues long: Putative 3-methyladenine DNA glycosylase (194 aa).

This sequence belongs to the DNA glycosylase MPG family.

In Myxococcus xanthus (strain DK1622), this protein is Putative 3-methyladenine DNA glycosylase.